The chain runs to 86 residues: Apolipoprotein C-I (86 aa).

Residues 1–26 form the signal peptide; sequence MRLFLSLPVLVVVLLMILEGPGPAQG.

This sequence belongs to the apolipoprotein C1 family.

It localises to the secreted. In terms of biological role, inhibitor of lipoprotein binding to the low density lipoprotein (LDL) receptor, LDL receptor-related protein, and very low density lipoprotein (VLDL) receptor. Associates with high density lipoproteins (HDL) and the triacylglycerol-rich lipoproteins in the plasma and makes up about 10% of the protein of the VLDL and 2% of that of HDL. Appears to interfere directly with fatty acid uptake and is also the major plasma inhibitor of cholesteryl ester transfer protein (CETP). Binds free fatty acids and reduces their intracellular esterification. Modulates the interaction of APOE with beta-migrating VLDL and inhibits binding of beta-VLDL to the LDL receptor-related protein. This is Apolipoprotein C-I (APOC1) from Ateles geoffroyi (Black-handed spider monkey).